The primary structure comprises 270 residues: Hydroxyethylthiazole kinase (270 aa).

Substrate is bound at residue methionine 46. Residues arginine 120 and threonine 166 each coordinate ATP. Glycine 193 lines the substrate pocket.

It belongs to the Thz kinase family. Mg(2+) serves as cofactor.

The catalysed reaction is 5-(2-hydroxyethyl)-4-methylthiazole + ATP = 4-methyl-5-(2-phosphooxyethyl)-thiazole + ADP + H(+). Its pathway is cofactor biosynthesis; thiamine diphosphate biosynthesis; 4-methyl-5-(2-phosphoethyl)-thiazole from 5-(2-hydroxyethyl)-4-methylthiazole: step 1/1. Catalyzes the phosphorylation of the hydroxyl group of 4-methyl-5-beta-hydroxyethylthiazole (THZ). This Herpetosiphon aurantiacus (strain ATCC 23779 / DSM 785 / 114-95) protein is Hydroxyethylthiazole kinase.